The chain runs to 163 residues: Photosystem II extrinsic protein V (163 aa).

The signal sequence occupies residues 1–26 (MLKKCVWLAVALCLCLWQFTMGTALA). His67 and His118 together coordinate heme c.

The protein belongs to the cytochrome c family. PsbV subfamily. As to quaternary structure, PSII is composed of 1 copy each of membrane proteins PsbA, PsbB, PsbC, PsbD, PsbE, PsbF, PsbH, PsbI, PsbJ, PsbK, PsbL, PsbM, PsbT, PsbX, PsbY, PsbZ, Psb30/Ycf12, peripheral proteins PsbO, CyanoQ (PsbQ), PsbU, PsbV and a large number of cofactors. It forms dimeric complexes. It depends on heme c as a cofactor.

The protein resides in the cellular thylakoid membrane. Functionally, one of the extrinsic, lumenal subunits of photosystem II (PSII). PSII is a light-driven water plastoquinone oxidoreductase, using light energy to abstract electrons from H(2)O, generating a proton gradient subsequently used for ATP formation. The extrinsic proteins stabilize the structure of photosystem II oxygen-evolving complex (OEC), the ion environment of oxygen evolution and protect the OEC against heat-induced inactivation. Low-potential cytochrome c that plays a role in the OEC of PSII. The sequence is that of Photosystem II extrinsic protein V from Thermosynechococcus vestitus (strain NIES-2133 / IAM M-273 / BP-1).